Reading from the N-terminus, the 229-residue chain is Large ribosomal subunit protein uL1 (229 aa).

Belongs to the universal ribosomal protein uL1 family. In terms of assembly, part of the 50S ribosomal subunit.

Its function is as follows. Binds directly to 23S rRNA. The L1 stalk is quite mobile in the ribosome, and is involved in E site tRNA release. Protein L1 is also a translational repressor protein, it controls the translation of the L11 operon by binding to its mRNA. The sequence is that of Large ribosomal subunit protein uL1 from Clostridium perfringens (strain ATCC 13124 / DSM 756 / JCM 1290 / NCIMB 6125 / NCTC 8237 / Type A).